A 125-amino-acid polypeptide reads, in one-letter code: Large ribosomal subunit protein eL31 (125 aa).

M1 is modified (N-acetylmethionine). S15 bears the Phosphoserine mark. 2 positions are modified to N6-succinyllysine: K55 and K70. K75 bears the N6-acetyllysine; alternate mark. The residue at position 75 (K75) is an N6-succinyllysine; alternate. S98 bears the Phosphoserine mark.

Belongs to the eukaryotic ribosomal protein eL31 family. As to quaternary structure, component of the large ribosomal subunit.

It localises to the cytoplasm. Its function is as follows. Component of the large ribosomal subunit. The ribosome is a large ribonucleoprotein complex responsible for the synthesis of proteins in the cell. The sequence is that of Large ribosomal subunit protein eL31 (RPL31) from Pongo abelii (Sumatran orangutan).